Consider the following 1328-residue polypeptide: ABC transporter G family member 2 (1328 aa).

Residues 53-299 enclose the ABC transporter 1 domain; that stretch reads VTARNLSMSI…FEGLGFKLPK (247 aa). Position 91-98 (91-98) interacts with ATP; sequence GSPGCGKT. Positions 388–665 constitute an ABC transmembrane type-2 1 domain; it reads ISSQVAVRMR…FGMYFFLKNV (278 aa). A run of 7 helical transmembrane segments spans residues 398 to 418, 428 to 448, 477 to 497, 504 to 524, 534 to 554, 559 to 579, and 642 to 662; these read IIKSIVMGLILGSLFYGLDLN, LIFFSLLFIVFSGMGAIAILF, IPIALLETVVFCVLVYWMCGL, FIYFLLMNFVGDLAFQSFFKM, LASVIAPAALAPFILFSGFMA, IGGWWIWIYWISPIKYAFEGL, and IDLLIVFAFGALFSFGMYFFL. Residues 670-691 are disordered; sequence RASDPKNDKRSKKASKRSKKIK. The span at 678-689 shows a compositional bias: basic residues; the sequence is KRSKKASKRSKK. In terms of domain architecture, ABC transporter 2 spans 721–960; the sequence is VYEVDVKKDG…DLLGYFENHG (240 aa). 755-762 lines the ATP pocket; sequence GPSGAGKS. The ABC transmembrane type-2 2 domain occupies 1049-1286; sequence VRRVQNIRTR…PICPITNGNQ (238 aa). 6 helical membrane passes run 1059–1076, 1087–1107, 1128–1148, 1172–1192, 1197–1217, and 1303–1323; these read LMRSLFLGVVLGTLFVRM, VSILFFSLMFGGMSGMSSIPI, IYLFTFIVTDLPWVFLSAIIY, FISFTTYFNFSMLAMVFATVL, IAHALGGVALSISSLFAGFMI, and AVIFGYSVFFFICIFIALKFI.

The protein belongs to the ABC transporter superfamily. ABCG family. PDR (TC 3.A.1.205) subfamily.

The protein resides in the endosome membrane. In terms of biological role, required for endocytosis and endosomal pH regulation. This is ABC transporter G family member 2 (abcG2) from Dictyostelium discoideum (Social amoeba).